The primary structure comprises 834 residues: MTGELTRREMLKAHAAGIAAATAGIALPAAAQPVPGGVEALQITWSKAPCRFCGTGCGVMVGVKEGQVVATHGDMQAEVNRGLNCIKGYFLSKIMYGTDRLKTPLLRKRNGAFAKDGEFEPVSWDEAFDVMAEQAKKVLKDKGPTAVGMFGSGQWTIFEGYAATKLMRAGFRSNNLDPNARHCMASAAYAFMRTFGMDEPMGCYDDFEHADAFVLWGSNMAEMHPILWTRLADRRLGHEHVKVAVLSTFTHRSMDLADIPIVFKPGTDLAILNYIANHIIQTGRVNEDFVRKHTTFMVGATDIGYGLRPDNPLEVKAVNAKDAAKMTPSDFESFKSFVSEYTLDKVVELTGVEAGFLEQLADLYADPKRKVMSLWTMGFNQHVRGVWVNQMVYNLHLLTGKISEPGNSPFSLTGQPSACGTAREVGTFAHRLPADMTVTNPEHRKHAEEIWRIPHGIIPEKPGYHAVEQDRMLKDGKLNFYWVQVNNNVQAAPNTQNETYQGYRNPDNFIVVSDVYPTITAMSADLILPAAMWVEKEGAYGNAERRTHVWHQLVDAPGEARSDLWQMVEFSKRFTTDEVWSTDILDANPGYRGKTLYDVLFKNGNVDSFPASEINKEYANREAEAFGFYIQKGLFEEYASFGRGHGHDLAPYDRYHDERGLRWPVVDGKETLWRYREGYDPYVKPGEGVKFYGRPDGKAVILAVPYEPPAESPDDEYNVWLVTGRVLEHWHSGSMTMRVPELYKAFPGAVCFMNAGDARDRGINQGAEVRIVSRRGEIRARVETRGRNRMPPGVIFVPWFDASRLINKVTLDATDPISKQTDFKKCAVKIVSVA.

The segment at residues 1–31 (MTGELTRREMLKAHAAGIAAATAGIALPAAA) is a signal peptide (tat-type signal). The 4Fe-4S Mo/W bis-MGD-type domain occupies 43–99 (ITWSKAPCRFCGTGCGVMVGVKEGQVVATHGDMQAEVNRGLNCIKGYFLSKIMYGTD). Positions 50, 53, 57, and 85 each coordinate [4Fe-4S] cluster. Residues lysine 87, glutamine 154, asparagine 179, cysteine 183, 216 to 223 (WGSNMAEM), 247 to 251 (STFTH), 266 to 268 (GTD), methionine 377, glutamine 381, asparagine 487, 513 to 514 (SD), lysine 536, aspartate 563, and 723 to 732 (TGRVLEHWHS) each bind Mo-bis(molybdopterin guanine dinucleotide). Tryptophan 799 contacts substrate. Asparagine 807 and lysine 824 together coordinate Mo-bis(molybdopterin guanine dinucleotide).

The protein belongs to the prokaryotic molybdopterin-containing oxidoreductase family. NasA/NapA/NarB subfamily. In terms of assembly, component of the periplasmic nitrate reductase NapAB complex composed of NapA and NapB. It depends on [4Fe-4S] cluster as a cofactor. Mo-bis(molybdopterin guanine dinucleotide) is required as a cofactor. Post-translationally, predicted to be exported by the Tat system. The position of the signal peptide cleavage has not been experimentally proven.

Its subcellular location is the periplasm. The enzyme catalyses 2 Fe(II)-[cytochrome] + nitrate + 2 H(+) = 2 Fe(III)-[cytochrome] + nitrite + H2O. Its function is as follows. Catalytic subunit of the periplasmic nitrate reductase complex NapAB. Receives electrons from NapB and catalyzes the reduction of nitrate to nitrite. The sequence is that of Periplasmic nitrate reductase from Rhizobium meliloti (strain 1021) (Ensifer meliloti).